Reading from the N-terminus, the 197-residue chain is MENVKEDRTLDLSGLSCPLPVVMTSETMRKMEEGQVLKVISTDPGFERDIWSWAKQSGNILLKVEKEDGKTIAYIKKASEAHEPSLWYWIKFHSLGVKLHIRQFCIQINPFVKKPTHFITFSAISEGTRAEKELKKLGEKDAVLIPIPDEIDPRCGVVLAVHGEKKAREIYEKLKDMDIAVEAIYEKKGKEYERVYP.

Cysteine 17 acts as the Cysteine persulfide intermediate in catalysis.

The protein belongs to the sulfur carrier protein TusA family.

The polypeptide is Putative sulfur carrier protein aq_1421 (Aquifex aeolicus (strain VF5)).